The following is a 59-amino-acid chain: Venom protein 27.7 (59 aa).

A signal peptide spans 1–29; it reads MTFITLTIGLSLRTIFLIFIFLPPPHLLA.

The protein belongs to the non-disulfide-bridged peptide (NDBP) superfamily. Expressed by the venom gland.

Its subcellular location is the secreted. The sequence is that of Venom protein 27.7 from Lychas mucronatus (Chinese swimming scorpion).